The primary structure comprises 166 residues: Zinc finger CCHC domain-containing protein 13 (166 aa).

The CCHC-type 1; degenerate zinc finger occupies Lys4–Arg21. The segment at Tyr45–Leu62 adopts a CCHC-type 2; degenerate zinc-finger fold. 4 consecutive CCHC-type zinc fingers follow at residues Asn65–Asp82, Gln89–Arg106, Gln110–Gln127, and Val128–Lys145.

The sequence is that of Zinc finger CCHC domain-containing protein 13 (ZCCHC13) from Homo sapiens (Human).